The primary structure comprises 229 residues: Adenylate kinase 1 (229 aa).

42–47 (GCGKGT) contacts ATP. Ser-62 carries the post-translational modification Phosphoserine. Residues Ser-63, Arg-68, 118 to 121 (GYPR), and Gln-125 contribute to the AMP site. Arg-156 is a binding site for ATP. Residues Arg-164 and Arg-175 each coordinate AMP.

This sequence belongs to the adenylate kinase family. AK1 subfamily. In terms of tissue distribution, high expression levels in the thorax, suggesting a possible function in the gastrointestinal or reproductive systems.

It is found in the cytoplasm. The enzyme catalyses AMP + ATP = 2 ADP. Catalyzes the reversible transfer of the terminal phosphate group between ATP and AMP. Plays an important role in cellular energy homeostasis and in adenine nucleotide metabolism. The protein is Adenylate kinase 1 of Drosophila melanogaster (Fruit fly).